The primary structure comprises 211 residues: Recombination protein RecR (211 aa).

Residues 70 to 85 (CRECFLITDREVCPIC) form a C4-type zinc finger. Positions 93–190 (KFICVVEESQ…KITRTAYGFQ (98 aa)) constitute a Toprim domain.

The protein belongs to the RecR family.

Its function is as follows. May play a role in DNA repair. It seems to be involved in an RecBC-independent recombinational process of DNA repair. It may act with RecF and RecO. The sequence is that of Recombination protein RecR from Aquifex aeolicus (strain VF5).